Here is a 178-residue protein sequence, read N- to C-terminus: Caveolin-1 (178 aa).

Ser2 is subject to N-acetylserine. Ser2 is modified (phosphoserine). The interval 2-94 (SGGKYVDSEG…WKASFTTFTV (93 aa)) is required for homooligomerization. Residues 2 to 104 (SGGKYVDSEG…TKYWFYRLLS (103 aa)) lie on the Cytoplasmic side of the membrane. N6-acetyllysine; alternate is present on Lys5. Lys5 is covalently cross-linked (Glycyl lysine isopeptide (Lys-Gly) (interchain with G-Cter in ubiquitin); alternate). Tyr6 bears the Phosphotyrosine mark. A Phosphoserine modification is found at Ser9. Phosphotyrosine; by ABL1 is present on Tyr14. Residue Tyr25 is modified to Phosphotyrosine. Glycyl lysine isopeptide (Lys-Gly) (interchain with G-Cter in ubiquitin) cross-links involve residues Lys26 and Lys30. Ser37 bears the Phosphoserine mark. Residues Lys39, Lys47, and Lys57 each participate in a glycyl lysine isopeptide (Lys-Gly) (interchain with G-Cter in ubiquitin) cross-link. The interaction with CAVIN3 stretch occupies residues 82-94 (DGIWKASFTTFTV). The helical intramembrane region spans 105 to 125 (ALFGIPMALIWGIYFAILSFL). The Cytoplasmic portion of the chain corresponds to 126–178 (HIWAVVPCIKSFLIEIQCISRVYSIYVHTFCDPFFEAVGKIFSNIRINMQKET). Residues 131 to 142 (VPCIKSFLIEIQ) form an interacts with SPRY1, SPRY2, SPRY3 and SPRY4 region. S-palmitoyl cysteine attachment occurs at residues Cys133, Cys143, and Cys156. The interval 149–160 (SIYVHTFCDPFF) is interacts with SPRY1, SPRY2, and SPRY4. Residues 167 to 178 (FSNIRINMQKET) are interacts with SPRY1, SPRY2, SPRY3 and SPRY4.

The protein belongs to the caveolin family. As to quaternary structure, homooligomer. Interacts with BMX, BTK, GLIPR2, NOSTRIN, SNAP25 and STX1A. Interacts with PACSIN2; this interaction induces membrane tubulation. Interacts (via the N-terminus) with DPP4; the interaction is direct. Interacts with SLC7A9. Interacts with CTNNB1, CDH1 and JUP. Interacts with TGFBR1. Interacts with CAVIN3 (via leucine-zipper domain) in a cholesterol-sensitive manner. Interacts with CAVIN1. Interacts with EHD2 in a cholesterol-dependent manner. Forms a ternary complex with UBXN6 and VCP; mediates CAV1 targeting to lysosomes for degradation. Interacts with ABCG1; this interaction regulates ABCG1-mediated cholesterol efflux. Interacts with NEU3; this interaction enhances NEU3 sialidase activity within caveola. Interacts (via C-terminus) with SPRY1, SPRY2 (via C-terminus), SPRY3, and SPRY4. Interacts with IGFBP5; this interaction allows trafficking of IGFBP5 from the plasma membrane to the nucleus. Phosphorylation of isoform Beta on serine residues is constitutive. Phosphorylated at Tyr-14 by ABL1 in response to oxidative stress. In terms of processing, ubiquitinated. Undergo monoubiquitination and multi- and/or polyubiquitination. Monoubiquitination of N-terminal lysines promotes integration in a ternary complex with UBXN6 and VCP which promotes oligomeric CAV1 targeting to lysosomes for degradation. Ubiquitinated by ZNRF1; leading to degradation and modulation of the TLR4-mediated immune response.

The protein resides in the golgi apparatus membrane. Its subcellular location is the cell membrane. It is found in the membrane. The protein localises to the caveola. It localises to the membrane raft. The protein resides in the golgi apparatus. Its subcellular location is the trans-Golgi network. Its function is as follows. May act as a scaffolding protein within caveolar membranes. Forms a stable heterooligomeric complex with CAV2 that targets to lipid rafts and drives caveolae formation. Mediates the recruitment of CAVIN proteins (CAVIN1/2/3/4) to the caveolae. Interacts directly with G-protein alpha subunits and can functionally regulate their activity. Involved in the costimulatory signal essential for T-cell receptor (TCR)-mediated T-cell activation. Its binding to DPP4 induces T-cell proliferation and NF-kappa-B activation in a T-cell receptor/CD3-dependent manner. Recruits CTNNB1 to caveolar membranes and may regulate CTNNB1-mediated signaling through the Wnt pathway. Negatively regulates TGFB1-mediated activation of SMAD2/3 by mediating the internalization of TGFBR1 from membrane rafts leading to its subsequent degradation. Binds 20(S)-hydroxycholesterol (20(S)-OHC). In Canis lupus familiaris (Dog), this protein is Caveolin-1 (CAV1).